The chain runs to 130 residues: MADQRFYATGKRKTAVARVWLKPGSGSVTINKRTIEEYIDRETSKMVIYQPLVLTGTFGKLDVTVNVLGGGGSGQAGAIRHGISKALLEFNPEFREVLKRAGFLTRDSRVKERKKYGRRSARARFQYSKR.

This sequence belongs to the universal ribosomal protein uS9 family.

The protein is Small ribosomal subunit protein uS9 of Syntrophobacter fumaroxidans (strain DSM 10017 / MPOB).